Here is a 260-residue protein sequence, read N- to C-terminus: (+)-borneol dehydrogenase 1 (260 aa).

NAD(+) contacts are provided by residues 20 to 26 (GGASGIG), Asp-44, 67 to 68 (DV), and 94 to 96 (NAG). The active-site Proton donor is the Ser-148. Positions 161, 165, and 196 each coordinate NAD(+). Catalysis depends on Tyr-161, which acts as the Proton acceptor. Residue Lys-165 is the Proton donor/acceptor of the active site.

The protein belongs to the short-chain dehydrogenases/reductases (SDR) family.

The catalysed reaction is (1R,2S,4R)-borneol + NAD(+) = (1R,4R)-camphor + NADH + H(+). Involved in the biosynthesis of monoterpene natural products related to camphor. Catalayzes the oxidation of (+)-borneol to (+)-camphor. Shows absolute selectivity towards (+)-borneol. Catalyzes the oxidation of (+)-isoborneol to (-)-camphor. Shows absolute selectivity towards (+)-isoborneol. This Salvia officinalis (Sage) protein is (+)-borneol dehydrogenase 1.